We begin with the raw amino-acid sequence, 66 residues long: Muscarinic toxin alpha (66 aa).

Intrachain disulfides connect Cys-3-Cys-24, Cys-17-Cys-42, Cys-46-Cys-58, and Cys-59-Cys-64.

This sequence belongs to the three-finger toxin family. Short-chain subfamily. Aminergic toxin sub-subfamily. In terms of tissue distribution, expressed by the venom gland.

Its subcellular location is the secreted. Its function is as follows. Selectively binds with high-affinity to the a2B-adrenoceptor subtype (ADRA2B). The toxin reversibly binds to ADRA2B, and its mode of inhibition is non-competitive. The toxin has also been described to bind with high affinity to all muscarinic receptor subtypes (Ki=23 nM (on CHRM1), Ki=44 nM (on CHRM2), Ki=3 nM (on CHRM3), Ki=5 nM (on CHRM4), and Ki=8 nM (on CHRM5)) but no other data support these affinity values. The chain is Muscarinic toxin alpha from Dendroaspis polylepis polylepis (Black mamba).